The primary structure comprises 385 residues: Muconate cycloisomerase 1-2 (385 aa).

The active site involves K171. Mn(2+) is bound by residues E226 and D251.

This sequence belongs to the mandelate racemase/muconate lactonizing enzyme family. Homooctamer. Mn(2+) is required as a cofactor.

It carries out the reaction (S)-muconolactone = cis,cis-muconate + H(+). It functions in the pathway aromatic compound metabolism; beta-ketoadipate pathway; 5-oxo-4,5-dihydro-2-furylacetate from catechol: step 2/3. In terms of biological role, catalyzes a syn cycloisomerization. The protein is Muconate cycloisomerase 1-2 (catB2) of Acinetobacter lwoffii.